The sequence spans 322 residues: Tetraacyldisaccharide 4'-kinase (322 aa).

Position 54-61 (54-61 (SVGGTGKT)) interacts with ATP.

It belongs to the LpxK family.

It carries out the reaction a lipid A disaccharide + ATP = a lipid IVA + ADP + H(+). It functions in the pathway glycolipid biosynthesis; lipid IV(A) biosynthesis; lipid IV(A) from (3R)-3-hydroxytetradecanoyl-[acyl-carrier-protein] and UDP-N-acetyl-alpha-D-glucosamine: step 6/6. Transfers the gamma-phosphate of ATP to the 4'-position of a tetraacyldisaccharide 1-phosphate intermediate (termed DS-1-P) to form tetraacyldisaccharide 1,4'-bis-phosphate (lipid IVA). The chain is Tetraacyldisaccharide 4'-kinase from Francisella philomiragia subsp. philomiragia (strain ATCC 25017 / CCUG 19701 / FSC 153 / O#319-036).